Here is a 142-residue protein sequence, read N- to C-terminus: Large ribosomal subunit protein mL42 (142 aa).

The N-terminal 32 residues, 1-32, are a transit peptide targeting the mitochondrion; sequence MALAAVKWAISSRTMLKHLFPVENGALYCVGH.

Belongs to the mitochondrion-specific ribosomal protein mL42 family. In terms of assembly, component of the mitochondrial ribosome large subunit (39S) which comprises a 16S rRNA and about 50 distinct proteins. Component of the mitochondrial ribosome small subunit (28S) which comprises a 12S rRNA and about 30 distinct proteins.

It is found in the mitochondrion. The polypeptide is Large ribosomal subunit protein mL42 (MRPL42) (Bos taurus (Bovine)).